Consider the following 460-residue polypeptide: Wadjet protein JetA (460 aa).

Its function is as follows. Component of antiplasmid transformation system Wadjet type I, composed of JetA, JetB, JetC and JetD. Expression of Wadjet type I in B.subtilis (strain BEST7003) reduces the transformation efficiency of plasmid pHCMC05. The chain is Wadjet protein JetA from Bacillus cereus (strain Q1).